Reading from the N-terminus, the 387-residue chain is Erythronate-4-phosphate dehydrogenase (387 aa).

Substrate-binding residues include Ser-45 and Thr-67. Asp-147 is a binding site for NAD(+). Residue Arg-208 is part of the active site. Asp-232 lines the NAD(+) pocket. Glu-237 is a catalytic residue. The active-site Proton donor is His-254. Gly-257 contacts NAD(+). Position 258 (Tyr-258) interacts with substrate.

It belongs to the D-isomer specific 2-hydroxyacid dehydrogenase family. PdxB subfamily. As to quaternary structure, homodimer.

It is found in the cytoplasm. The catalysed reaction is 4-phospho-D-erythronate + NAD(+) = (R)-3-hydroxy-2-oxo-4-phosphooxybutanoate + NADH + H(+). Its pathway is cofactor biosynthesis; pyridoxine 5'-phosphate biosynthesis; pyridoxine 5'-phosphate from D-erythrose 4-phosphate: step 2/5. In terms of biological role, catalyzes the oxidation of erythronate-4-phosphate to 3-hydroxy-2-oxo-4-phosphonooxybutanoate. The polypeptide is Erythronate-4-phosphate dehydrogenase (Shewanella woodyi (strain ATCC 51908 / MS32)).